Reading from the N-terminus, the 183-residue chain is Dual-action ribosomal maturation protein DarP (183 aa).

The protein belongs to the DarP family.

The protein localises to the cytoplasm. Its function is as follows. Member of a network of 50S ribosomal subunit biogenesis factors which assembles along the 30S-50S interface, preventing incorrect 23S rRNA structures from forming. Promotes peptidyl transferase center (PTC) maturation. This Salmonella arizonae (strain ATCC BAA-731 / CDC346-86 / RSK2980) protein is Dual-action ribosomal maturation protein DarP.